Consider the following 185-residue polypeptide: GTP-binding protein rhb1 (185 aa).

The GTP site is built by Ser-16, Gly-18, Lys-19, Ser-20, Ser-21, Val-32, Tyr-35, Thr-38, Asn-119, Asp-122, and Ala-150. A Mg(2+)-binding site is contributed by Ser-20. Residues 35–43 (YYPTIENTF) carry the Effector region motif. Thr-38 lines the Mg(2+) pocket. Cys-182 carries the cysteine methyl ester modification. Cys-182 is lipidated: S-farnesyl cysteine. Positions 183-185 (VIA) are cleaved as a propeptide — removed in mature form.

This sequence belongs to the small GTPase superfamily. Rheb family.

The protein localises to the cell membrane. The catalysed reaction is GTP + H2O = GDP + phosphate + H(+). Its function is as follows. Binds GTP and exhibits intrinsic GTPase activity. Regulates entry into stationary phase when extracellular nitrogen levels are adequate for growth. The protein is GTP-binding protein rhb1 (rhb1) of Schizosaccharomyces pombe (strain 972 / ATCC 24843) (Fission yeast).